A 311-amino-acid polypeptide reads, in one-letter code: MNVQERRNLNAAVERHTSDHVSWYLSSIGRIPLLTAEEEVELSRKVQLMMALLENPDAESNSENQAVLQAGQRAKTKMLKANLRLVVSVAKKYQNQGLELLDLIQEGSLGLERAVEKFDPALGYKFSTYAYWWIRQSMTRAIDNHARTIRLPIHVSEKISRIKKMTRELTHQLKRLPSRAEIAEALKLPLQDVEMLLSQSTPCTSLDAQARGDDGRSFLGDLIPDPKSLEPMDAMDRHIQHEQISTWLAHLTEREQQVLQLRFGLHDGEQHTLAEIGRRLNVSRERIRQVEARALQKLRVLSQQPLCPEAC.

A sigma-70 factor domain-2 region spans residues 78–148 (MLKANLRLVV…TRAIDNHART (71 aa)). The Interaction with polymerase core subunit RpoC motif lies at 102 to 105 (DLIQ). Residues 157–234 (EKISRIKKMT…DPKSLEPMDA (78 aa)) form a sigma-70 factor domain-3 region. Residues 247 to 304 (WLAHLTEREQQVLQLRFGLHDGEQHTLAEIGRRLNVSRERIRQVEARALQKLRVLSQQ) form a sigma-70 factor domain-4 region. The H-T-H motif DNA-binding region spans 273–292 (LAEIGRRLNVSRERIRQVEA).

It belongs to the sigma-70 factor family.

The protein resides in the cytoplasm. Its function is as follows. Sigma factors are initiation factors that promote the attachment of RNA polymerase to specific initiation sites and are then released. In Synechococcus elongatus (strain ATCC 33912 / PCC 7942 / FACHB-805) (Anacystis nidulans R2), this protein is RNA polymerase sigma factor SigA4 (sigA4).